Here is a 411-residue protein sequence, read N- to C-terminus: Copper resistance protein CRF1 (411 aa).

Positions 1–40 (MVVIEGIKYACERCIRGHRVSSCTHTQQPLIRIKPKGRPA) form a DNA-binding region, copper-fist. The Zn(2+) site is built by C11, C14, C23, and H25. 4 stretches are compositionally biased toward low complexity: residues 115-190 (QQQA…PHSP), 205-214 (SSSSLSSLHS), 227-241 (SHNS…ANSP), and 350-370 (SVAA…PPSS). 2 disordered regions span residues 115-241 (QQQA…ANSP) and 348-389 (EMSV…VSPA).

It localises to the nucleus. Functionally, transcriptional regulator involved in resistance to high copper concentration. The protein is Copper resistance protein CRF1 (CRF1) of Yarrowia lipolytica (strain CLIB 122 / E 150) (Yeast).